The following is a 344-amino-acid chain: Protein AIR2 (344 aa).

Residues 1–23 are disordered; it reads MEKNTAPFVVDTAPTTPPDKLVA. Phosphoserine occurs at positions 31 and 49. CCHC-type zinc fingers lie at residues 61 to 78, 99 to 116, and 162 to 179; these read PKCNNCSQRGHLKKDCPH, IQCSKCDEVGHYRSQCPH, and IYCYNCGGKGHFGDDCKE. Disordered regions lie at residues 227 to 274 and 312 to 344; these read YDED…PTIR and STYVDNNSISNSSNYRNYNSYQPYRSGTLGKRR. A compositionally biased stretch (low complexity) spans 317–337; sequence NNSISNSSNYRNYNSYQPYRS.

The protein belongs to the AIR1 family. In terms of assembly, component of the TRAMP complex (also called TRF4 complex) composed of at least HUL4, MTR4, PAP2/TRF4 and either AIR1 or AIR2. Interacts with HMT1 and NPL3. The interaction with NPL3 requires the presence of HMT1. Interacts directly with PAP2.

The protein localises to the nucleus. Component of the TRAMP (TRF4) complex which has a poly(A) RNA polymerase activity and is involved in a post-transcriptional quality control mechanism limiting inappropriate expression of genetic information. Polyadenylation is required for the degradative activity of the exosome on several of its nuclear RNA substrates like cryptic transcripts generated by RNA polymerase II and III, or hypomethylated pre-tRNAi-Met. Both complexes polyadenylate RNA processing and degradation intermediates of snRNAs, snoRNAs and mRNAs that accumulate in strains lacking a functional exosome. AIR2 also inhibits the methylation of NPL3 mediated by HMT1 through its interaction with HMT1. The sequence is that of Protein AIR2 (AIR2) from Saccharomyces cerevisiae (strain ATCC 204508 / S288c) (Baker's yeast).